A 301-amino-acid polypeptide reads, in one-letter code: Homoserine O-acetyltransferase (301 aa).

Cys-142 serves as the catalytic Acyl-thioester intermediate. Residues Lys-163 and Ser-192 each coordinate substrate. Residue His-235 is the Proton acceptor of the active site. Residue Glu-237 is part of the active site. Arg-249 provides a ligand contact to substrate.

Belongs to the MetA family.

Its subcellular location is the cytoplasm. The catalysed reaction is L-homoserine + acetyl-CoA = O-acetyl-L-homoserine + CoA. Its pathway is amino-acid biosynthesis; L-methionine biosynthesis via de novo pathway; O-acetyl-L-homoserine from L-homoserine: step 1/1. In terms of biological role, transfers an acetyl group from acetyl-CoA to L-homoserine, forming acetyl-L-homoserine. The polypeptide is Homoserine O-acetyltransferase (Bacillus anthracis (strain A0248)).